Reading from the N-terminus, the 462-residue chain is Cytochrome P450 20A1 (462 aa).

The helical transmembrane segment at F4–P24 threads the bilayer. Position 409 (C409) interacts with heme.

The protein belongs to the cytochrome P450 family. Heme serves as cofactor.

The protein resides in the membrane. In Bos taurus (Bovine), this protein is Cytochrome P450 20A1 (CYP20A1).